The following is a 367-amino-acid chain: Peptide chain release factor 1 (367 aa).

N5-methylglutamine is present on Gln-243.

This sequence belongs to the prokaryotic/mitochondrial release factor family. Methylated by PrmC. Methylation increases the termination efficiency of RF1.

Its subcellular location is the cytoplasm. Functionally, peptide chain release factor 1 directs the termination of translation in response to the peptide chain termination codons UAG and UAA. This is Peptide chain release factor 1 from Acidovorax ebreus (strain TPSY) (Diaphorobacter sp. (strain TPSY)).